The following is a 525-amino-acid chain: Protein kinase PINOID 2 (525 aa).

The interval 1–27 (MANSSIFYKDNESDYESSTVGPDSSRR) is disordered. Residues 87–465 (FRLLKRLGSG…SIEIKRHEFF (379 aa)) enclose the Protein kinase domain. Residues 93–101 (LGSGDIGSV) and Lys-118 each bind ATP. Asp-214 acts as the Proton acceptor in catalysis. An AGC-kinase C-terminal domain is found at 466–525 (EGVNWALIRSIKPPWVPKEETSHKTKGDNRSVNYYLPPRFMMSRKERNEPYHVSNYFDYF).

It belongs to the protein kinase superfamily. Ser/Thr protein kinase family.

It catalyses the reaction L-seryl-[protein] + ATP = O-phospho-L-seryl-[protein] + ADP + H(+). It carries out the reaction L-threonyl-[protein] + ATP = O-phospho-L-threonyl-[protein] + ADP + H(+). Its function is as follows. Serine/threonine-protein kinase involved in the regulation of auxin signaling. Plays a minor role in the regulation of cellular auxin efflux and cotyledon organogenesis. This Arabidopsis thaliana (Mouse-ear cress) protein is Protein kinase PINOID 2 (PID2).